The primary structure comprises 244 residues: 1-(5-phosphoribosyl)-5-[(5-phosphoribosylamino)methylideneamino] imidazole-4-carboxamide isomerase (244 aa).

Residue Asp-10 is the Proton acceptor of the active site. Asp-129 functions as the Proton donor in the catalytic mechanism.

It belongs to the HisA/HisF family.

Its subcellular location is the cytoplasm. It carries out the reaction 1-(5-phospho-beta-D-ribosyl)-5-[(5-phospho-beta-D-ribosylamino)methylideneamino]imidazole-4-carboxamide = 5-[(5-phospho-1-deoxy-D-ribulos-1-ylimino)methylamino]-1-(5-phospho-beta-D-ribosyl)imidazole-4-carboxamide. The protein operates within amino-acid biosynthesis; L-histidine biosynthesis; L-histidine from 5-phospho-alpha-D-ribose 1-diphosphate: step 4/9. This is 1-(5-phosphoribosyl)-5-[(5-phosphoribosylamino)methylideneamino] imidazole-4-carboxamide isomerase from Rhodococcus opacus (strain B4).